Reading from the N-terminus, the 247-residue chain is Carboxy-S-adenosyl-L-methionine synthase (247 aa).

Residues Tyr39, 64 to 66 (GCS), 89 to 90 (DN), 117 to 118 (DI), Asn132, and Arg199 each bind S-adenosyl-L-methionine.

Belongs to the class I-like SAM-binding methyltransferase superfamily. Cx-SAM synthase family. As to quaternary structure, homodimer.

It catalyses the reaction prephenate + S-adenosyl-L-methionine = carboxy-S-adenosyl-L-methionine + 3-phenylpyruvate + H2O. Its function is as follows. Catalyzes the conversion of S-adenosyl-L-methionine (SAM) to carboxy-S-adenosyl-L-methionine (Cx-SAM). The sequence is that of Carboxy-S-adenosyl-L-methionine synthase from Escherichia coli O7:K1 (strain IAI39 / ExPEC).